The sequence spans 154 residues: Large ribosomal subunit protein uL30 (154 aa).

Belongs to the universal ribosomal protein uL30 family. As to quaternary structure, part of the 50S ribosomal subunit.

This Methanococcus vannielii protein is Large ribosomal subunit protein uL30.